The sequence spans 97 residues: MNIRPLHDRVIIKRQESESKSAGGIVLTGSAAGKSTRGTVLAVGNGRILDNGSVKSLDVKVGDVVIFNEGYGAKTEKMDHEEVLILTESDILAIVEE.

It belongs to the GroES chaperonin family. Heptamer of 7 subunits arranged in a ring. Interacts with the chaperonin GroEL.

The protein resides in the cytoplasm. Functionally, together with the chaperonin GroEL, plays an essential role in assisting protein folding. The GroEL-GroES system forms a nano-cage that allows encapsulation of the non-native substrate proteins and provides a physical environment optimized to promote and accelerate protein folding. GroES binds to the apical surface of the GroEL ring, thereby capping the opening of the GroEL channel. The polypeptide is Co-chaperonin GroES (Buchnera aphidicola subsp. Tetraneura caerulescens).